A 210-amino-acid chain; its full sequence is Heart- and neural crest derivatives-expressed protein 2 (210 aa).

The tract at residues 81–101 (SGAGGLMQRPVKRRGTANRKE) is disordered. Over residues 90 to 101 (PVKRRGTANRKE) the composition is skewed to basic residues. The bHLH domain maps to 92–144 (KRRGTANRKERRRTISINSAFAELRECIPNVPADTKLSKIKTLRLATSYIAYL).

In terms of assembly, efficient DNA binding requires dimerization with another bHLH protein. Heart, liver and spleen.

Its subcellular location is the nucleus. Its function is as follows. Essential for cardiac morphogenesis and for the development of branchial arches. Binds DNA on E-box consensus sequence 5'-CANNTG-3'. This chain is Heart- and neural crest derivatives-expressed protein 2 (hand2), found in Xenopus laevis (African clawed frog).